The following is a 471-amino-acid chain: Cell division protein FtsP (471 aa).

The segment at residues 1 to 27 is a signal peptide (tat-type signal); that stretch reads MSLNRRQFIQASGLALCAGMTPLAAKA. A Plastocyanin-like domain is found at 229 to 287; that stretch reads VRLRLLNASNSRRYVMRLSDGRAMNVIASDQGLLPAPMAVNQLSLAPGERREILIDMSQ.

Belongs to the FtsP family. Post-translationally, predicted to be exported by the Tat system. The position of the signal peptide cleavage has not been experimentally proven.

It is found in the periplasm. Cell division protein that is required for growth during stress conditions. May be involved in protecting or stabilizing the divisomal assembly under conditions of stress. This is Cell division protein FtsP from Pectobacterium atrosepticum (strain SCRI 1043 / ATCC BAA-672) (Erwinia carotovora subsp. atroseptica).